A 186-amino-acid polypeptide reads, in one-letter code: Peptidyl-tRNA hydrolase (186 aa).

Y16 provides a ligand contact to tRNA. Catalysis depends on H21, which acts as the Proton acceptor. TRNA contacts are provided by Y60 and N62.

It belongs to the PTH family. As to quaternary structure, monomer.

Its subcellular location is the cytoplasm. It carries out the reaction an N-acyl-L-alpha-aminoacyl-tRNA + H2O = an N-acyl-L-amino acid + a tRNA + H(+). In terms of biological role, hydrolyzes ribosome-free peptidyl-tRNAs (with 1 or more amino acids incorporated), which drop off the ribosome during protein synthesis, or as a result of ribosome stalling. Catalyzes the release of premature peptidyl moieties from peptidyl-tRNA molecules trapped in stalled 50S ribosomal subunits, and thus maintains levels of free tRNAs and 50S ribosomes. The chain is Peptidyl-tRNA hydrolase from Tropheryma whipplei (strain Twist) (Whipple's bacillus).